Here is a 173-residue protein sequence, read N- to C-terminus: 16S rRNA aminocarboxypropyltransferase (173 aa).

S-adenosyl-L-methionine is bound by residues threonine 25, leucine 72, leucine 96, and serine 115.

The protein belongs to the TDD superfamily. TSR3 family.

Its subcellular location is the cytoplasm. The catalysed reaction is an N(1)-methylpseudouridine in rRNA + S-adenosyl-L-methionine = N(1)-methyl-N(3)-[(3S)-3-amino-3-carboxypropyl]pseudouridine in rRNA + S-methyl-5'-thioadenosine + H(+). Functionally, aminocarboxypropyltransferase that catalyzes the aminocarboxypropyl transfer on pseudouridine corresponding to position 914 in M.jannaschii 16S rRNA. It constitutes the last step in biosynthesis of the hypermodified N1-methyl-N3-(3-amino-3-carboxypropyl) pseudouridine (m1acp3-Psi). This is 16S rRNA aminocarboxypropyltransferase from Methanococcoides burtonii (strain DSM 6242 / NBRC 107633 / OCM 468 / ACE-M).